The primary structure comprises 640 residues: Lysophospholipase (640 aa).

A signal peptide spans 1–25; sequence MWFLNSVNLLFLVCSVALHLDAVNA. Positions 38–589 constitute a PLA2c domain; it reads DCDENINLVR…EKYCWNGTVD (552 aa). Asn-84, Asn-126, Asn-163, Asn-173, Asn-218, Asn-280, Asn-310, Asn-317, Asn-348, Asn-391, Asn-492, Asn-516, Asn-544, Asn-568, and Asn-585 each carry an N-linked (GlcNAc...) asparagine glycan. Positions 594–610 are enriched in low complexity; sequence ISSTTSSSASSTSTSDS. Positions 594–616 are disordered; the sequence is ISSTTSSSASSTSTSDSGNKENS.

The protein belongs to the lysophospholipase family. In terms of processing, highly glycosylated.

The protein localises to the secreted. It catalyses the reaction a 1-acyl-sn-glycero-3-phosphocholine + H2O = sn-glycerol 3-phosphocholine + a fatty acid + H(+). Its function is as follows. Catalyzes the release of fatty acids from lysophospholipids. At acidic pH the enzyme hydrolyzes all phospholipid substrates without metal ion. On the other hand, at alkaline pH the enzyme shows substrate specificity for phosphatidylcholine and lysophosphatidylcholine and requires Ca(2+), Fe(3+), or Al(3+) for the activity. The sequence is that of Lysophospholipase (PLB) from Kluyveromyces lactis (strain ATCC 8585 / CBS 2359 / DSM 70799 / NBRC 1267 / NRRL Y-1140 / WM37) (Yeast).